The following is a 406-amino-acid chain: Multifunctional CCA protein (406 aa).

2 residues coordinate ATP: Gly-8 and Arg-11. Residues Gly-8 and Arg-11 each contribute to the CTP site. The Mg(2+) site is built by Asp-21 and Asp-23. Positions 91, 138, and 141 each coordinate ATP. CTP contacts are provided by Arg-91, Arg-138, and Arg-141. One can recognise an HD domain in the interval 229–331; the sequence is TGIHQEMVSD…LELLGRCDAL (103 aa).

It belongs to the tRNA nucleotidyltransferase/poly(A) polymerase family. Bacterial CCA-adding enzyme type 1 subfamily. Monomer. Can also form homodimers and oligomers. Mg(2+) serves as cofactor. Requires Ni(2+) as cofactor.

The enzyme catalyses a tRNA precursor + 2 CTP + ATP = a tRNA with a 3' CCA end + 3 diphosphate. The catalysed reaction is a tRNA with a 3' CCA end + 2 CTP + ATP = a tRNA with a 3' CCACCA end + 3 diphosphate. Catalyzes the addition and repair of the essential 3'-terminal CCA sequence in tRNAs without using a nucleic acid template. Adds these three nucleotides in the order of C, C, and A to the tRNA nucleotide-73, using CTP and ATP as substrates and producing inorganic pyrophosphate. tRNA 3'-terminal CCA addition is required both for tRNA processing and repair. Also involved in tRNA surveillance by mediating tandem CCA addition to generate a CCACCA at the 3' terminus of unstable tRNAs. While stable tRNAs receive only 3'-terminal CCA, unstable tRNAs are marked with CCACCA and rapidly degraded. In Stenotrophomonas maltophilia (strain R551-3), this protein is Multifunctional CCA protein.